The following is a 547-amino-acid chain: Carboxypeptidase N subunit 2 (547 aa).

An N-terminal signal peptide occupies residues 1 to 21 (MFPGAWLCWVSLLLLARLTQP). The LRRNT domain occupies 22–49 (CPVGCDCFGREVFCSDEQLADIPPDIPP). Asn-74, Asn-111, and Asn-119 each carry an N-linked (GlcNAc...) asparagine glycan. 12 LRR repeats span residues 98–119 (RLQDLEITGSPVSNLSAHIFSN), 122–143 (SLEKLTLDFDRLAGLPEDLFCH), 146–167 (ILESLQLQGNQLRTLPGRLFQS), 170–191 (DLRTLNLAQNLLTQLPKGAFQS), 194–215 (GLQMLKLSNNMLARLPEGALGS), 218–239 (SLQELFLDGNAITELSPHLFSQ), 242–263 (SLEMLWLQHNAICHLPVSLFSS), 266–287 (NLTFLSLKDNALRTLPEGLFAH), 290–311 (GLLHLSLSYNQLETIPEGAFTN), 314–335 (RLVSLTLSHNAITDLPEHVFRN), 338–359 (QLVKLSLDSNNLTALHPALFHN), and 362–383 (RLQLLNLSRNQLTTLPGGIFDT). Residues Asn-266 and Asn-311 are each glycosylated (N-linked (GlcNAc...) asparagine). N-linked (GlcNAc...) asparagine glycans are attached at residues Asn-348, Asn-359, and Asn-367. One can recognise an LRRCT domain in the interval 395 to 447 (NPWQCDCHLSYLTSWLRLYNNQISNTHTFCAGPAYLKGQLVPNLKQEQLICPV). Residue Asn-520 is glycosylated (N-linked (GlcNAc...) asparagine).

As to quaternary structure, tetramer of two catalytic chains and two glycosylated inactive chains.

Its subcellular location is the secreted. Functionally, the 83 kDa subunit binds and stabilizes the catalytic subunit at 37 degrees Celsius and keeps it in circulation. Under some circumstances it may be an allosteric modifier of the catalytic subunit. The chain is Carboxypeptidase N subunit 2 (Cpn2) from Mus musculus (Mouse).